The chain runs to 501 residues: Lysine--tRNA ligase (501 aa).

Residues Glu411 and Glu418 each contribute to the Mg(2+) site.

This sequence belongs to the class-II aminoacyl-tRNA synthetase family. As to quaternary structure, homodimer. Mg(2+) serves as cofactor.

It is found in the cytoplasm. It catalyses the reaction tRNA(Lys) + L-lysine + ATP = L-lysyl-tRNA(Lys) + AMP + diphosphate. The polypeptide is Lysine--tRNA ligase (Pseudomonas aeruginosa (strain UCBPP-PA14)).